The following is a 141-amino-acid chain: uncharacterized protein (141 aa).

Residues 24–52 are a coiled coil; the sequence is KVQTALQKEAKTIKREQKKIKDEIDTFKT.

This is an uncharacterized protein from Invertebrate iridescent virus 6 (IIV-6).